The primary structure comprises 194 residues: Prefoldin subunit 3 (194 aa).

It belongs to the prefoldin subunit alpha family. Heterohexamer of two PFD-alpha type and four PFD-beta type subunits. Interacts with itself. Interacts with Vhl and betaTub56D/tubulin beta-1 chain. Interacts with tubulin alpha-beta heterodimers by itself or in complex with Vhl. Does not interact with microtubules (MTs). In terms of tissue distribution, expressed in larval central nervous system (CNS) and pupal testis (at protein level).

The protein localises to the cytoplasm. Its function is as follows. Binds specifically to cytosolic chaperonin (c-CPN) and transfers target proteins to it. Binds to nascent polypeptide chain and promotes folding in an environment in which there are many competing pathways for nonnative proteins. Required for tubulin stability and spindle and centrosome formation in cooperation with Vhl. The protein is Prefoldin subunit 3 (mgr) of Drosophila melanogaster (Fruit fly).